An 84-amino-acid polypeptide reads, in one-letter code: NAD(P)H-quinone oxidoreductase subunit O (84 aa).

This sequence belongs to the complex I NdhO subunit family. NDH-1 can be composed of about 15 different subunits; different subcomplexes with different compositions have been identified which probably have different functions.

The protein resides in the cellular thylakoid membrane. It carries out the reaction a plastoquinone + NADH + (n+1) H(+)(in) = a plastoquinol + NAD(+) + n H(+)(out). It catalyses the reaction a plastoquinone + NADPH + (n+1) H(+)(in) = a plastoquinol + NADP(+) + n H(+)(out). NDH-1 shuttles electrons from an unknown electron donor, via FMN and iron-sulfur (Fe-S) centers, to quinones in the respiratory and/or the photosynthetic chain. The immediate electron acceptor for the enzyme in this species is believed to be plastoquinone. Couples the redox reaction to proton translocation, and thus conserves the redox energy in a proton gradient. Cyanobacterial NDH-1 also plays a role in inorganic carbon-concentration. The polypeptide is NAD(P)H-quinone oxidoreductase subunit O (Synechococcus sp. (strain CC9902)).